The primary structure comprises 657 residues: Probable serine/threonine-protein kinase CA_C1728 (657 aa).

One can recognise a Protein kinase domain in the interval Tyr-10 to Val-274. Residues Ile-16–Val-24 and Lys-39 contribute to the ATP site. Catalysis depends on Asp-143, which acts as the Proton acceptor. Positions Pro-286–Asn-334 are disordered. A compositionally biased stretch (polar residues) spans Gln-288–Lys-298. PASTA domains are found at residues Ser-375–Ser-441, Asp-443–Arg-509, and Glu-512–Arg-577. A disordered region spans residues Thr-581–Lys-657. Composition is skewed to low complexity over residues Gln-584–Asn-600, Pro-613–Gly-637, and Gly-645–Lys-657.

It belongs to the protein kinase superfamily. Ser/Thr protein kinase family.

The enzyme catalyses L-seryl-[protein] + ATP = O-phospho-L-seryl-[protein] + ADP + H(+). It catalyses the reaction L-threonyl-[protein] + ATP = O-phospho-L-threonyl-[protein] + ADP + H(+). In Clostridium acetobutylicum (strain ATCC 824 / DSM 792 / JCM 1419 / IAM 19013 / LMG 5710 / NBRC 13948 / NRRL B-527 / VKM B-1787 / 2291 / W), this protein is Probable serine/threonine-protein kinase CA_C1728.